A 213-amino-acid polypeptide reads, in one-letter code: ATP-dependent dethiobiotin synthetase BioD 2 (213 aa).

13–18 (DIGKTI) contributes to the ATP binding site. T17 serves as a coordination point for Mg(2+). Residue K38 is part of the active site. T42 lines the substrate pocket. ATP-binding positions include D50 and 115–118 (EGAG). D50 and E115 together coordinate Mg(2+).

The protein belongs to the dethiobiotin synthetase family. In terms of assembly, homodimer. Mg(2+) is required as a cofactor.

The protein localises to the cytoplasm. It catalyses the reaction (7R,8S)-7,8-diammoniononanoate + CO2 + ATP = (4R,5S)-dethiobiotin + ADP + phosphate + 3 H(+). It participates in cofactor biosynthesis; biotin biosynthesis; biotin from 7,8-diaminononanoate: step 1/2. In terms of biological role, catalyzes a mechanistically unusual reaction, the ATP-dependent insertion of CO2 between the N7 and N8 nitrogen atoms of 7,8-diaminopelargonic acid (DAPA, also called 7,8-diammoniononanoate) to form a ureido ring. In Pasteurella multocida (strain Pm70), this protein is ATP-dependent dethiobiotin synthetase BioD 2.